We begin with the raw amino-acid sequence, 397 residues long: Elongation factor Tu (397 aa).

Residues 10–207 enclose the tr-type G domain; the sequence is KPHCNIGTIG…EVDKYIPQPE (198 aa). A G1 region spans residues 19 to 26; the sequence is GHVDHGKT. 19 to 26 is a GTP binding site; sequence GHVDHGKT. Thr26 lines the Mg(2+) pocket. The G2 stretch occupies residues 61–65; sequence GITIS. The G3 stretch occupies residues 82–85; it reads DCPG. GTP is bound by residues 82 to 86 and 137 to 140; these read DCPGH and NKCD. The segment at 137-140 is G4; it reads NKCD. Residues 175–177 are G5; that stretch reads SAL.

This sequence belongs to the TRAFAC class translation factor GTPase superfamily. Classic translation factor GTPase family. EF-Tu/EF-1A subfamily. As to quaternary structure, monomer.

The protein resides in the cytoplasm. The enzyme catalyses GTP + H2O = GDP + phosphate + H(+). Its function is as follows. GTP hydrolase that promotes the GTP-dependent binding of aminoacyl-tRNA to the A-site of ribosomes during protein biosynthesis. The polypeptide is Elongation factor Tu (Azorhizobium caulinodans (strain ATCC 43989 / DSM 5975 / JCM 20966 / LMG 6465 / NBRC 14845 / NCIMB 13405 / ORS 571)).